The following is a 1334-amino-acid chain: Aldehyde oxidase 4 (1334 aa).

Residues 6–93 (DELIFFVNGK…GAAVTTVEGV (88 aa)) form the 2Fe-2S ferredoxin-type domain. The [2Fe-2S] cluster site is built by Cys-45, Cys-50, Cys-53, and Cys-75. A Mo-molybdopterin-binding site is contributed by Gln-114. 4 residues coordinate [2Fe-2S] cluster: Cys-115, Cys-118, Cys-150, and Cys-152. Residue Cys-152 participates in Mo-molybdopterin binding. The FAD-binding PCMH-type domain maps to 235-421 (FQGERTIWIM…LSVFIPYSGQ (187 aa)). FAD contacts are provided by residues 263–270 (LVMGNTAV), Ala-345, Thr-354, His-358, Asp-367, and Ala-411. Mo-molybdopterin contacts are provided by residues Ala-802, 802–803 (AF), Leu-1043, 1084–1087 (GSMG), Gln-1199, and Leu-1263. The active-site Proton acceptor; for azaheterocycle hydroxylase activity is Glu-1265.

Belongs to the xanthine dehydrogenase family. As to quaternary structure, homodimer. It depends on [2Fe-2S] cluster as a cofactor. Requires FAD as cofactor. The cofactor is Mo-molybdopterin.

The protein resides in the cytoplasm. The enzyme catalyses an aldehyde + O2 + H2O = a carboxylate + H2O2 + H(+). The catalysed reaction is retinal + O2 + H2O = retinoate + H2O2 + H(+). Aldehyde oxidase able to catalyze the oxidation of retinaldehyde into retinoate. Acts as a negative modulator of the epidermal trophism. May be able to oxidize a wide variety of aldehydes into their corresponding carboxylates and to hydroxylate azaheterocycles. In Rattus norvegicus (Rat), this protein is Aldehyde oxidase 4 (Aox4).